We begin with the raw amino-acid sequence, 426 residues long: 3-phosphoshikimate 1-carboxyvinyltransferase (426 aa).

3-phosphoshikimate-binding residues include Lys22, Ser23, and Arg27. Lys22 serves as a coordination point for phosphoenolpyruvate. Residues Gly96 and Arg124 each contribute to the phosphoenolpyruvate site. Positions 170, 171, 172, 198, 314, 337, and 341 each coordinate 3-phosphoshikimate. Residue Gln172 participates in phosphoenolpyruvate binding. Asp314 acts as the Proton acceptor in catalysis. The phosphoenolpyruvate site is built by Arg345, Arg387, and Lys412.

Belongs to the EPSP synthase family. Monomer.

The protein resides in the cytoplasm. The enzyme catalyses 3-phosphoshikimate + phosphoenolpyruvate = 5-O-(1-carboxyvinyl)-3-phosphoshikimate + phosphate. It functions in the pathway metabolic intermediate biosynthesis; chorismate biosynthesis; chorismate from D-erythrose 4-phosphate and phosphoenolpyruvate: step 6/7. Its function is as follows. Catalyzes the transfer of the enolpyruvyl moiety of phosphoenolpyruvate (PEP) to the 5-hydroxyl of shikimate-3-phosphate (S3P) to produce enolpyruvyl shikimate-3-phosphate and inorganic phosphate. The protein is 3-phosphoshikimate 1-carboxyvinyltransferase of Shewanella baltica (strain OS195).